We begin with the raw amino-acid sequence, 171 residues long: SPbeta prophage-derived uncharacterized protein YokC (171 aa).

This is SPbeta prophage-derived uncharacterized protein YokC (yokC) from Bacillus subtilis (strain 168).